Consider the following 245-residue polypeptide: Phycocyanobilin:ferredoxin oxidoreductase (245 aa).

It belongs to the HY2 family.

The enzyme catalyses (2R,3Z)-phycocyanobilin + 4 oxidized [2Fe-2S]-[ferredoxin] = biliverdin IXalpha + 4 reduced [2Fe-2S]-[ferredoxin] + 4 H(+). Its function is as follows. Catalyzes the four-electron reduction of biliverdin IX-alpha (2-electron reduction at both the A and D rings); the reaction proceeds via an isolatable 2-electron intermediate, 181,182-dihydrobiliverdin. The polypeptide is Phycocyanobilin:ferredoxin oxidoreductase (Microcystis aeruginosa (strain NIES-843 / IAM M-2473)).